Here is a 466-residue protein sequence, read N- to C-terminus: Alpha-galacturonidase (466 aa).

11–78 contributes to the NAD(+) binding site; it reads VKIAYIGGGS…GKWNYETANT (68 aa). Residue Asn157 participates in substrate binding. Cys179 contacts Mn(2+). Residue His180 is the Proton donor of the active site. Position 216 (His216) interacts with Mn(2+).

It belongs to the glycosyl hydrolase 4 family. As to quaternary structure, homotetramer. NAD(+) serves as cofactor. Requires Mn(2+) as cofactor.

The enzyme catalyses [(1-&gt;4)-alpha-D-galacturonosyl](n) + H2O = alpha-D-galacturonate + [(1-&gt;4)-alpha-D-galacturonosyl](n-1). Alpha-galacturonidase able to catalyze the hydrolysis of the chromogenic substrate p-nitrophenyl-alpha-D-galacturonic acid (pNPalphaGalUA). It is probable that alpha-1,4-di-galacturonate (GalUA(2)) is the naturally occurring substrate. This Lachnoclostridium phytofermentans (strain ATCC 700394 / DSM 18823 / ISDg) (Clostridium phytofermentans) protein is Alpha-galacturonidase.